Reading from the N-terminus, the 145-residue chain is Bacilliredoxin BH2759 (145 aa).

Belongs to the bacilliredoxin family.

The protein is Bacilliredoxin BH2759 of Halalkalibacterium halodurans (strain ATCC BAA-125 / DSM 18197 / FERM 7344 / JCM 9153 / C-125) (Bacillus halodurans).